Consider the following 260-residue polypeptide: MTKTLTKHLQAIKDSKRGIFVPYIMAGDHAKGLDGLFETITLLENSGVSAIEVGIPWSDPVADGTIIELAGQRSLAKDVTLTAIIKKLQEKKTQVPLVIMTYINPVYQYGIEAFVKDLAETSVKGLIIPDLPNEHADFITPYLRDSDIALVPLVSLTTGIDRQKQLIDGAEGFIYAVAINGVTGKTGNYRDDLDKHLSNLTAYADIPVLTGFGVSTEEDIKRFNAVSDGVIVGSKIVRDLHDGKEEEVAEFVTFGSHFEK.

Catalysis depends on proton acceptor residues E52 and D63.

This sequence belongs to the TrpA family. As to quaternary structure, tetramer of two alpha and two beta chains.

It catalyses the reaction (1S,2R)-1-C-(indol-3-yl)glycerol 3-phosphate + L-serine = D-glyceraldehyde 3-phosphate + L-tryptophan + H2O. The protein operates within amino-acid biosynthesis; L-tryptophan biosynthesis; L-tryptophan from chorismate: step 5/5. In terms of biological role, the alpha subunit is responsible for the aldol cleavage of indoleglycerol phosphate to indole and glyceraldehyde 3-phosphate. The polypeptide is Tryptophan synthase alpha chain (Streptococcus thermophilus (strain ATCC BAA-491 / LMD-9)).